Consider the following 489-residue polypeptide: tRNA(Ile)-lysidine synthase (489 aa).

An ATP-binding site is contributed by Ser35–Ser40.

This sequence belongs to the tRNA(Ile)-lysidine synthase family.

The protein resides in the cytoplasm. The enzyme catalyses cytidine(34) in tRNA(Ile2) + L-lysine + ATP = lysidine(34) in tRNA(Ile2) + AMP + diphosphate + H(+). In terms of biological role, ligates lysine onto the cytidine present at position 34 of the AUA codon-specific tRNA(Ile) that contains the anticodon CAU, in an ATP-dependent manner. Cytidine is converted to lysidine, thus changing the amino acid specificity of the tRNA from methionine to isoleucine. This Burkholderia pseudomallei (strain K96243) protein is tRNA(Ile)-lysidine synthase.